We begin with the raw amino-acid sequence, 49 residues long: uncharacterized protein (49 aa).

Positions 1 to 22 (MVFLLFLSFVLSSIFLVPLVYM) are cleaved as a signal peptide.

It localises to the secreted. This is an uncharacterized protein from Dictyostelium discoideum (Social amoeba).